A 217-amino-acid polypeptide reads, in one-letter code: tRNA (guanine-N(7)-)-methyltransferase (217 aa).

Residues E46, E71, D98, and D120 each contribute to the S-adenosyl-L-methionine site. D120 is an active-site residue. Substrate is bound at residue K124. Residues 126–131 (RHEKRR) are interaction with RNA. Substrate contacts are provided by residues D156 and 196–199 (TEYE).

This sequence belongs to the class I-like SAM-binding methyltransferase superfamily. TrmB family.

It catalyses the reaction guanosine(46) in tRNA + S-adenosyl-L-methionine = N(7)-methylguanosine(46) in tRNA + S-adenosyl-L-homocysteine. It functions in the pathway tRNA modification; N(7)-methylguanine-tRNA biosynthesis. Its function is as follows. Catalyzes the formation of N(7)-methylguanine at position 46 (m7G46) in tRNA. The sequence is that of tRNA (guanine-N(7)-)-methyltransferase from Lactobacillus gasseri (strain ATCC 33323 / DSM 20243 / BCRC 14619 / CIP 102991 / JCM 1131 / KCTC 3163 / NCIMB 11718 / NCTC 13722 / AM63).